Consider the following 156-residue polypeptide: Small ribosomal subunit protein uS7 (156 aa).

It belongs to the universal ribosomal protein uS7 family. As to quaternary structure, part of the 30S ribosomal subunit. Contacts proteins S9 and S11.

Functionally, one of the primary rRNA binding proteins, it binds directly to 16S rRNA where it nucleates assembly of the head domain of the 30S subunit. Is located at the subunit interface close to the decoding center, probably blocks exit of the E-site tRNA. This is Small ribosomal subunit protein uS7 from Polynucleobacter asymbioticus (strain DSM 18221 / CIP 109841 / QLW-P1DMWA-1) (Polynucleobacter necessarius subsp. asymbioticus).